We begin with the raw amino-acid sequence, 242 residues long: Small ribosomal subunit protein eS4 (242 aa).

Residues 43 to 106 (LPLMIIVRDI…GDVYRVLPDE (64 aa)) form the S4 RNA-binding domain.

Belongs to the eukaryotic ribosomal protein eS4 family.

This chain is Small ribosomal subunit protein eS4 (rps4e), found in Methanothermobacter thermautotrophicus (strain ATCC 29096 / DSM 1053 / JCM 10044 / NBRC 100330 / Delta H) (Methanobacterium thermoautotrophicum).